A 256-amino-acid chain; its full sequence is Hemin import ATP-binding protein HmuV (256 aa).

The ABC transporter domain occupies 2 to 238 (ISAQNLVYSL…QALTMLYGAD (237 aa)). 34-41 (GPNGAGKS) contributes to the ATP binding site.

The protein belongs to the ABC transporter superfamily. Heme (hemin) importer (TC 3.A.1.14.5) family. In terms of assembly, the complex is composed of two ATP-binding proteins (HmuV), two transmembrane proteins (HmuU) and a solute-binding protein (HmuT).

The protein localises to the cell inner membrane. Functionally, part of the ABC transporter complex HmuTUV involved in hemin import. Responsible for energy coupling to the transport system. In Shigella dysenteriae serotype 1 (strain Sd197), this protein is Hemin import ATP-binding protein HmuV.